The following is a 72-amino-acid chain: Cytochrome c oxidase subunit 2 (72 aa).

The Mitochondrial intermembrane segment spans residues 1-14 (MAHPSQLGFQDAAS). Residues 15 to 45 (PVMEELLHFHDHALMIVFLISTLVLYIIVAM) traverse the membrane as a helical segment. Residues 46-72 (VSTKLTNKHILDSQEVEIVWTILPAVI) are Mitochondrial matrix-facing.

Belongs to the cytochrome c oxidase subunit 2 family. Component of the cytochrome c oxidase (complex IV, CIV), a multisubunit enzyme composed of 14 subunits. The complex is composed of a catalytic core of 3 subunits MT-CO1, MT-CO2 and MT-CO3, encoded in the mitochondrial DNA, and 11 supernumerary subunits COX4I, COX5A, COX5B, COX6A, COX6B, COX6C, COX7A, COX7B, COX7C, COX8 and NDUFA4, which are encoded in the nuclear genome. The complex exists as a monomer or a dimer and forms supercomplexes (SCs) in the inner mitochondrial membrane with NADH-ubiquinone oxidoreductase (complex I, CI) and ubiquinol-cytochrome c oxidoreductase (cytochrome b-c1 complex, complex III, CIII), resulting in different assemblies (supercomplex SCI(1)III(2)IV(1) and megacomplex MCI(2)III(2)IV(2)). Found in a complex with TMEM177, COA6, COX18, COX20, SCO1 and SCO2. Interacts with TMEM177 in a COX20-dependent manner. Interacts with COX20. Interacts with COX16. Requires Cu cation as cofactor.

It localises to the mitochondrion inner membrane. The catalysed reaction is 4 Fe(II)-[cytochrome c] + O2 + 8 H(+)(in) = 4 Fe(III)-[cytochrome c] + 2 H2O + 4 H(+)(out). Component of the cytochrome c oxidase, the last enzyme in the mitochondrial electron transport chain which drives oxidative phosphorylation. The respiratory chain contains 3 multisubunit complexes succinate dehydrogenase (complex II, CII), ubiquinol-cytochrome c oxidoreductase (cytochrome b-c1 complex, complex III, CIII) and cytochrome c oxidase (complex IV, CIV), that cooperate to transfer electrons derived from NADH and succinate to molecular oxygen, creating an electrochemical gradient over the inner membrane that drives transmembrane transport and the ATP synthase. Cytochrome c oxidase is the component of the respiratory chain that catalyzes the reduction of oxygen to water. Electrons originating from reduced cytochrome c in the intermembrane space (IMS) are transferred via the dinuclear copper A center (CU(A)) of subunit 2 and heme A of subunit 1 to the active site in subunit 1, a binuclear center (BNC) formed by heme A3 and copper B (CU(B)). The BNC reduces molecular oxygen to 2 water molecules using 4 electrons from cytochrome c in the IMS and 4 protons from the mitochondrial matrix. The chain is Cytochrome c oxidase subunit 2 (mt-co2) from Atractosteus spatula (Alligator gar).